Consider the following 713-residue polypeptide: Cyclomaltodextrin glucanotransferase (713 aa).

The signal sequence occupies residues Met-1–Ala-27. Positions Ser-28 to Pro-165 are A1. Ca(2+) is bound by residues Asp-54, Asn-56, Asn-59, Asn-60, Gly-78, and Asp-80. A substrate-binding site is contributed by Tyr-127–Trp-128. Ca(2+) is bound at residue Asn-166. The interval Asn-166 to Gln-229 is b. His-167 contacts substrate. Ca(2+) is bound at residue Ile-217. A substrate-binding site is contributed by Asn-220–Asp-223. A Ca(2+)-binding site is contributed by Asp-226. The interval Asn-230–Tyr-434 is A2. Arg-254 contacts substrate. The active-site Nucleophile is Asp-256. Lys-259–His-260 contacts substrate. His-260 contributes to the Ca(2+) binding site. Glu-285 functions as the Proton donor in the catalytic mechanism. Residues His-355, Asp-399, and Arg-403 each coordinate substrate. A c region spans residues Gly-435–Thr-522. The segment at Glu-523–Leu-609 is d. The region spanning Pro-526–Phe-606 is the IPT/TIG domain. In terms of domain architecture, CBM20 spans Val-608 to Asn-713. Positions Thr-610–Asn-713 are e.

Belongs to the glycosyl hydrolase 13 family. Monomer. Ca(2+) serves as cofactor.

The protein localises to the secreted. It catalyses the reaction Cyclizes part of a (1-&gt;4)-alpha-D-glucan chain by formation of a (1-&gt;4)-alpha-D-glucosidic bond.. This Paenibacillus macerans (Bacillus macerans) protein is Cyclomaltodextrin glucanotransferase.